The sequence spans 90 residues: Small ribosomal subunit protein bS20 (90 aa).

The segment at Met-1 to Lys-29 is disordered.

This sequence belongs to the bacterial ribosomal protein bS20 family.

In terms of biological role, binds directly to 16S ribosomal RNA. This is Small ribosomal subunit protein bS20 from Anaeromyxobacter sp. (strain Fw109-5).